The primary structure comprises 1158 residues: ATP-dependent helicase/deoxyribonuclease subunit B (1158 aa).

The UvrD-like helicase ATP-binding domain occupies 1 to 275; that stretch reads MTLHAYLGRA…QYFNQLYRFN (275 aa). Position 8–15 (8–15) interacts with ATP; it reads GRAGTGKS. The region spanning 269 to 583 is the UvrD-like helicase C-terminal domain; that stretch reads NQLYRFNNQD…SIGTMDLAKV (315 aa). Residues Cys-784, Cys-1112, Cys-1115, and Cys-1121 each contribute to the [4Fe-4S] cluster site.

It belongs to the helicase family. AddB/RexB type 1 subfamily. As to quaternary structure, heterodimer of AddA and AddB. Requires Mg(2+) as cofactor. [4Fe-4S] cluster serves as cofactor.

The heterodimer acts as both an ATP-dependent DNA helicase and an ATP-dependent, dual-direction single-stranded exonuclease. Recognizes the chi site generating a DNA molecule suitable for the initiation of homologous recombination. The AddB subunit has 5' -&gt; 3' nuclease activity but not helicase activity. The chain is ATP-dependent helicase/deoxyribonuclease subunit B from Staphylococcus aureus (strain MSSA476).